We begin with the raw amino-acid sequence, 594 residues long: NADH-quinone oxidoreductase subunit C/D (594 aa).

The tract at residues 1 to 185 (MTTGSALYIP…DPFSLNLAKQ (185 aa)) is NADH dehydrogenase I subunit C. The interval 209-594 (DYMFLNLGPN…IDFVMADVDR (386 aa)) is NADH dehydrogenase I subunit D.

This sequence in the N-terminal section; belongs to the complex I 30 kDa subunit family. In the C-terminal section; belongs to the complex I 49 kDa subunit family. As to quaternary structure, NDH-1 is composed of 13 different subunits. Subunits NuoB, CD, E, F, and G constitute the peripheral sector of the complex.

It localises to the cell inner membrane. It carries out the reaction a quinone + NADH + 5 H(+)(in) = a quinol + NAD(+) + 4 H(+)(out). Its function is as follows. NDH-1 shuttles electrons from NADH, via FMN and iron-sulfur (Fe-S) centers, to quinones in the respiratory chain. The immediate electron acceptor for the enzyme in this species is believed to be ubiquinone. Couples the redox reaction to proton translocation (for every two electrons transferred, four hydrogen ions are translocated across the cytoplasmic membrane), and thus conserves the redox energy in a proton gradient. The protein is NADH-quinone oxidoreductase subunit C/D of Pseudomonas fluorescens (strain Pf0-1).